Consider the following 575-residue polypeptide: SH2B adapter protein 3 (575 aa).

Disordered stretches follow at residues M1–P23, R83–Q136, and S150–P176. Position 13 is a phosphoserine (S13). Over residues R83–G93 the composition is skewed to basic and acidic residues. The span at G95–P104 shows a compositional bias: low complexity. 3 positions are modified to phosphoserine: S103, S120, and S150. Residues G152–A174 are compositionally biased toward low complexity. Residues E194–G307 enclose the PH domain. The segment at A322–G346 is disordered. Over residues P325–S337 the composition is skewed to low complexity. The residue at position 330 (S330) is a Phosphoserine. The region spanning W364–V462 is the SH2 domain. 2 disordered regions span residues S503 to I525 and P546 to L575.

The protein belongs to the SH2B adapter family. In terms of assembly, binds to the tyrosine-phosphorylated TCR zeta chain via its SH2 domain. Post-translationally, tyrosine phosphorylated by LCK. In terms of tissue distribution, preferentially expressed by lymphoid cell lines.

Its function is as follows. Links T-cell receptor activation signal to phospholipase C-gamma-1, GRB2 and phosphatidylinositol 3-kinase. The chain is SH2B adapter protein 3 (SH2B3) from Homo sapiens (Human).